Reading from the N-terminus, the 427-residue chain is Enolase (427 aa).

Q163 is a (2R)-2-phosphoglycerate binding site. The active-site Proton donor is E205. D242, E285, and D312 together coordinate Mg(2+). The (2R)-2-phosphoglycerate site is built by K337, R366, S367, and K388. K337 acts as the Proton acceptor in catalysis.

It belongs to the enolase family. Mg(2+) is required as a cofactor.

It localises to the cytoplasm. It is found in the secreted. Its subcellular location is the cell surface. It carries out the reaction (2R)-2-phosphoglycerate = phosphoenolpyruvate + H2O. Its pathway is carbohydrate degradation; glycolysis; pyruvate from D-glyceraldehyde 3-phosphate: step 4/5. Its function is as follows. Catalyzes the reversible conversion of 2-phosphoglycerate (2-PG) into phosphoenolpyruvate (PEP). It is essential for the degradation of carbohydrates via glycolysis. The chain is Enolase from Burkholderia orbicola (strain MC0-3).